Here is a 320-residue protein sequence, read N- to C-terminus: Cytochrome f (320 aa).

Positions 1-35 (MQTRNTLSWIKEEITRSISVSLMIYIITWASISNA) are cleaved as a signal peptide. Residues Tyr36, Cys56, Cys59, and His60 each contribute to the heme site. The chain crosses the membrane as a helical span at residues 286-306 (VQGLLFFLASVVLAQIFLVLK).

The protein belongs to the cytochrome f family. In terms of assembly, the 4 large subunits of the cytochrome b6-f complex are cytochrome b6, subunit IV (17 kDa polypeptide, petD), cytochrome f and the Rieske protein, while the 4 small subunits are PetG, PetL, PetM and PetN. The complex functions as a dimer. Heme is required as a cofactor.

Its subcellular location is the plastid. It localises to the chloroplast thylakoid membrane. In terms of biological role, component of the cytochrome b6-f complex, which mediates electron transfer between photosystem II (PSII) and photosystem I (PSI), cyclic electron flow around PSI, and state transitions. This is Cytochrome f from Carica papaya (Papaya).